The sequence spans 209 residues: Small ribosomal subunit protein uS4 (209 aa).

The interval 23-46 (SRNPLLKKPHPPGQHGMQRKKKSD) is disordered. In terms of domain architecture, S4 RNA-binding spans 93-153 (CRLDNMVYRM…EKSKRLQSVK (61 aa)).

Belongs to the universal ribosomal protein uS4 family. As to quaternary structure, part of the 30S ribosomal subunit. Contacts protein S5. The interaction surface between S4 and S5 is involved in control of translational fidelity.

In terms of biological role, one of the primary rRNA binding proteins, it binds directly to 16S rRNA where it nucleates assembly of the body of the 30S subunit. Its function is as follows. With S5 and S12 plays an important role in translational accuracy. In Chlamydia pneumoniae (Chlamydophila pneumoniae), this protein is Small ribosomal subunit protein uS4.